The sequence spans 530 residues: Portal protein B (530 aa).

The protein belongs to the siphoviridae portal protein family. As to quaternary structure, homododecamer. Interacts with the terminase complex composed of two small and one large terminase subunits. Proteolytically cleaved by the viral protease during capsid maturation.

The protein resides in the virion. Forms the portal vertex of the capsid. This portal plays critical roles in head assembly, genome packaging, neck/tail attachment, and genome ejection. The portal protein multimerizes as a single ring-shaped homododecamer arranged around a central channel. Binds to the terminase subunits to form the packaging machine. This is Portal protein B from Enterobacteria phage P21 (Bacteriophage 21).